We begin with the raw amino-acid sequence, 72 residues long: DNA-directed RNA polymerase subunit Rpo10 (72 aa).

Zn(2+) is bound by residues cysteine 7, cysteine 10, cysteine 54, and cysteine 55.

Belongs to the archaeal Rpo10/eukaryotic RPB10 RNA polymerase subunit family. As to quaternary structure, part of the RNA polymerase complex. Zn(2+) serves as cofactor.

It is found in the cytoplasm. It catalyses the reaction RNA(n) + a ribonucleoside 5'-triphosphate = RNA(n+1) + diphosphate. DNA-dependent RNA polymerase (RNAP) catalyzes the transcription of DNA into RNA using the four ribonucleoside triphosphates as substrates. In Picrophilus torridus (strain ATCC 700027 / DSM 9790 / JCM 10055 / NBRC 100828 / KAW 2/3), this protein is DNA-directed RNA polymerase subunit Rpo10.